The chain runs to 452 residues: Exodeoxyribonuclease 7 large subunit (452 aa).

This sequence belongs to the XseA family. As to quaternary structure, heterooligomer composed of large and small subunits.

Its subcellular location is the cytoplasm. The catalysed reaction is Exonucleolytic cleavage in either 5'- to 3'- or 3'- to 5'-direction to yield nucleoside 5'-phosphates.. Functionally, bidirectionally degrades single-stranded DNA into large acid-insoluble oligonucleotides, which are then degraded further into small acid-soluble oligonucleotides. In Bordetella avium (strain 197N), this protein is Exodeoxyribonuclease 7 large subunit.